The sequence spans 1152 residues: Nardilysin (1152 aa).

The signal sequence occupies residues 1–20 (MLRKVTVAAVCATRRKLCEA). Disordered stretches follow at residues 81 to 108 (LGADESEEEGRRGSLSNAGDPEIVKSPS) and 133 to 208 (MEGK…KKTT). 3 positions are modified to phosphoserine: Ser86, Ser94, and Ser96. The segment covering 141–198 (TDDEEEEEVEEEEEDDDEDSGAEIEDDDEEGFDDEDEFDDEHDDDLDTEDNELEELEE) has biased composition (acidic residues). His234 provides a ligand contact to Zn(2+). The active-site Proton acceptor is Glu237. Residues His238 and Glu315 each coordinate Zn(2+).

Belongs to the peptidase M16 family. As to quaternary structure, interacts with BACE1 and NRG1. Zn(2+) is required as a cofactor.

It is found in the mitochondrion. Its subcellular location is the cell projection. The protein resides in the dendrite. It catalyses the reaction Hydrolysis of polypeptides, preferably at -Xaa-|-Arg-Lys-, and less commonly at -Arg-|-Arg-Xaa-, in which Xaa is not Arg or Lys.. Functionally, cleaves peptide substrates on the N-terminus of arginine residues in dibasic pairs. Is a critical activator of BACE1- and ADAM17-mediated pro-neuregulin ectodomain shedding, involved in the positive regulation of axonal maturation and myelination. Required for proper functioning of 2-oxoglutarate dehydrogenase (OGDH). In Pongo abelii (Sumatran orangutan), this protein is Nardilysin.